Reading from the N-terminus, the 455-residue chain is Bifunctional protein GlmU (455 aa).

Residues 1–227 (MGLSVIILAA…CEEVQGVNDR (227 aa)) form a pyrophosphorylase region. Residues 8–11 (LAAG), K22, Q73, 78–79 (GT), 100–102 (YGD), G137, E152, N167, and N225 each bind UDP-N-acetyl-alpha-D-glucosamine. Mg(2+) is bound at residue D102. N225 serves as a coordination point for Mg(2+). A linker region spans residues 228 to 248 (WELTKLERYYQRLMAKKLSLA). The interval 249-455 (GVTIIDPERF…KGWHRPTKKE (207 aa)) is N-acetyltransferase. The UDP-N-acetyl-alpha-D-glucosamine site is built by R332 and K350. Catalysis depends on H362, which acts as the Proton acceptor. Residues Y365 and N376 each contribute to the UDP-N-acetyl-alpha-D-glucosamine site. Acetyl-CoA contacts are provided by residues A379, 385–386 (NY), S404, A422, and R439.

It in the N-terminal section; belongs to the N-acetylglucosamine-1-phosphate uridyltransferase family. The protein in the C-terminal section; belongs to the transferase hexapeptide repeat family. As to quaternary structure, homotrimer. Requires Mg(2+) as cofactor.

The protein resides in the cytoplasm. The enzyme catalyses alpha-D-glucosamine 1-phosphate + acetyl-CoA = N-acetyl-alpha-D-glucosamine 1-phosphate + CoA + H(+). It carries out the reaction N-acetyl-alpha-D-glucosamine 1-phosphate + UTP + H(+) = UDP-N-acetyl-alpha-D-glucosamine + diphosphate. It functions in the pathway nucleotide-sugar biosynthesis; UDP-N-acetyl-alpha-D-glucosamine biosynthesis; N-acetyl-alpha-D-glucosamine 1-phosphate from alpha-D-glucosamine 6-phosphate (route II): step 2/2. The protein operates within nucleotide-sugar biosynthesis; UDP-N-acetyl-alpha-D-glucosamine biosynthesis; UDP-N-acetyl-alpha-D-glucosamine from N-acetyl-alpha-D-glucosamine 1-phosphate: step 1/1. Its pathway is bacterial outer membrane biogenesis; LPS lipid A biosynthesis. Functionally, catalyzes the last two sequential reactions in the de novo biosynthetic pathway for UDP-N-acetylglucosamine (UDP-GlcNAc). The C-terminal domain catalyzes the transfer of acetyl group from acetyl coenzyme A to glucosamine-1-phosphate (GlcN-1-P) to produce N-acetylglucosamine-1-phosphate (GlcNAc-1-P), which is converted into UDP-GlcNAc by the transfer of uridine 5-monophosphate (from uridine 5-triphosphate), a reaction catalyzed by the N-terminal domain. In Coxiella burnetii (strain RSA 493 / Nine Mile phase I), this protein is Bifunctional protein GlmU.